Here is a 582-residue protein sequence, read N- to C-terminus: Potassium-transporting ATPase potassium-binding subunit (582 aa).

Helical transmembrane passes span 6–26, 65–85, 87–107, 136–156, 178–198, 277–297, 304–324, 402–422, 441–461, 505–525, and 546–566; these read LVQL…LGLY, IYAL…YVLE, LQGG…FVAV, GLAV…VALI, VLYI…WQGV, LEML…GVMI, LAIL…TLAA, GLYG…LMVG, ALVI…AAVI, IAGA…VLAL, and GGIF…LTFV.

It belongs to the KdpA family. The system is composed of three essential subunits: KdpA, KdpB and KdpC.

It localises to the cell inner membrane. Functionally, part of the high-affinity ATP-driven potassium transport (or Kdp) system, which catalyzes the hydrolysis of ATP coupled with the electrogenic transport of potassium into the cytoplasm. This subunit binds the periplasmic potassium ions and delivers the ions to the membrane domain of KdpB through an intramembrane tunnel. The polypeptide is Potassium-transporting ATPase potassium-binding subunit (Solidesulfovibrio magneticus (strain ATCC 700980 / DSM 13731 / RS-1) (Desulfovibrio magneticus)).